Consider the following 279-residue polypeptide: 1-(5-phosphoribosyl)-5-[(5-phosphoribosylamino)methylideneamino] imidazole-4-carboxamide isomerase (279 aa).

This sequence belongs to the HisA/HisF family.

It is found in the cytoplasm. The catalysed reaction is 1-(5-phospho-beta-D-ribosyl)-5-[(5-phospho-beta-D-ribosylamino)methylideneamino]imidazole-4-carboxamide = 5-[(5-phospho-1-deoxy-D-ribulos-1-ylimino)methylamino]-1-(5-phospho-beta-D-ribosyl)imidazole-4-carboxamide. It functions in the pathway amino-acid biosynthesis; L-histidine biosynthesis; L-histidine from 5-phospho-alpha-D-ribose 1-diphosphate: step 4/9. This chain is 1-(5-phosphoribosyl)-5-[(5-phosphoribosylamino)methylideneamino] imidazole-4-carboxamide isomerase (HIS6), found in Candida albicans (Yeast).